Reading from the N-terminus, the 124-residue chain is UPF0344 protein OB1184 (124 aa).

Helical transmembrane passes span 3 to 23, 33 to 53, 62 to 82, and 104 to 124; these read HMHI…LVMY, IIHM…GILT, MPIL…VAMM, and IALV…FLFI.

This sequence belongs to the UPF0344 family.

It localises to the cell membrane. This Oceanobacillus iheyensis (strain DSM 14371 / CIP 107618 / JCM 11309 / KCTC 3954 / HTE831) protein is UPF0344 protein OB1184.